The primary structure comprises 1158 residues: ATP-dependent helicase/deoxyribonuclease subunit B (1158 aa).

Position 8–15 (8–15) interacts with ATP; the sequence is GRAGTGKS. Positions 791, 1112, 1115, and 1121 each coordinate [4Fe-4S] cluster.

This sequence belongs to the helicase family. AddB/RexB type 1 subfamily. Heterodimer of AddA and AddB. Mg(2+) is required as a cofactor. Requires [4Fe-4S] cluster as cofactor.

The heterodimer acts as both an ATP-dependent DNA helicase and an ATP-dependent, dual-direction single-stranded exonuclease. Recognizes the chi site generating a DNA molecule suitable for the initiation of homologous recombination. The AddB subunit has 5' -&gt; 3' nuclease activity but not helicase activity. This is ATP-dependent helicase/deoxyribonuclease subunit B from Clostridium perfringens (strain 13 / Type A).